A 237-amino-acid polypeptide reads, in one-letter code: tRNA1(Val) (adenine(37)-N6)-methyltransferase (237 aa).

This sequence belongs to the methyltransferase superfamily. tRNA (adenine-N(6)-)-methyltransferase family.

It localises to the cytoplasm. The enzyme catalyses adenosine(37) in tRNA1(Val) + S-adenosyl-L-methionine = N(6)-methyladenosine(37) in tRNA1(Val) + S-adenosyl-L-homocysteine + H(+). Functionally, specifically methylates the adenine in position 37 of tRNA(1)(Val) (anticodon cmo5UAC). The protein is tRNA1(Val) (adenine(37)-N6)-methyltransferase of Bacteroides fragilis (strain ATCC 25285 / DSM 2151 / CCUG 4856 / JCM 11019 / LMG 10263 / NCTC 9343 / Onslow / VPI 2553 / EN-2).